The primary structure comprises 283 residues: Pantothenate synthetase (283 aa).

Residue 34-41 (MGALHDGH) participates in ATP binding. Residue H41 is the Proton donor of the active site. Residue Q65 coordinates (R)-pantoate. Q65 contacts beta-alanine. Residue 152–155 (GEKD) participates in ATP binding. Q158 contacts (R)-pantoate. Residues V181 and 189–192 (MSSR) contribute to the ATP site.

This sequence belongs to the pantothenate synthetase family. As to quaternary structure, homodimer.

The protein localises to the cytoplasm. The enzyme catalyses (R)-pantoate + beta-alanine + ATP = (R)-pantothenate + AMP + diphosphate + H(+). It participates in cofactor biosynthesis; (R)-pantothenate biosynthesis; (R)-pantothenate from (R)-pantoate and beta-alanine: step 1/1. Its function is as follows. Catalyzes the condensation of pantoate with beta-alanine in an ATP-dependent reaction via a pantoyl-adenylate intermediate. This is Pantothenate synthetase from Rhodopseudomonas palustris (strain BisB18).